The chain runs to 81 residues: Putative membrane protein insertion efficiency factor (81 aa).

The protein belongs to the UPF0161 family.

Its subcellular location is the cell inner membrane. Could be involved in insertion of integral membrane proteins into the membrane. The protein is Putative membrane protein insertion efficiency factor of Legionella pneumophila subsp. pneumophila (strain Philadelphia 1 / ATCC 33152 / DSM 7513).